The chain runs to 467 residues: Cysteine--tRNA ligase (467 aa).

Cys30 provides a ligand contact to Zn(2+). Residues 32-42 carry the 'HIGH' region motif; that stretch reads PTVYDDSHLGH. The Zn(2+) site is built by Cys209, His239, and Glu243. Residues 271–275 carry the 'KMSKS' region motif; sequence KMSKS. An ATP-binding site is contributed by Lys274.

This sequence belongs to the class-I aminoacyl-tRNA synthetase family. As to quaternary structure, monomer. Requires Zn(2+) as cofactor.

The protein resides in the cytoplasm. It catalyses the reaction tRNA(Cys) + L-cysteine + ATP = L-cysteinyl-tRNA(Cys) + AMP + diphosphate. This is Cysteine--tRNA ligase from Aliarcobacter butzleri (strain RM4018) (Arcobacter butzleri).